Consider the following 133-residue polypeptide: Vesicle transport protein GOT1A (133 aa).

Over 1-9 the chain is Cytoplasmic; the sequence is MISITEWQK. The helical transmembrane segment at 10–30 threads the bilayer; that stretch reads IGVGITGFGVFFILFGILLYF. Position 31 (Asp31) is a topological domain, lumenal. Residues 32-52 form a helical membrane-spanning segment; that stretch reads SVLLAFGNLLFLTGLSLIIGL. Residues 53-68 are Cytoplasmic-facing; it reads RRTFAFFFQRHKLKGT. The chain crosses the membrane as a helical span at residues 69-89; that stretch reads SFFLGGVAIVLLRWPLLGMLL. Topologically, residues 90–92 are lumenal; that stretch reads EAY. The chain crosses the membrane as a helical span at residues 93–113; sequence GFISLFKGFFPVVFGFLGSAF. The Cytoplasmic segment spans residues 114–133; the sequence is NIPFLSTLFQKLQGSSSSMV.

The protein belongs to the GOT1 family.

The protein localises to the golgi apparatus membrane. Its function is as follows. May be involved in fusion of ER-derived transport vesicles with the Golgi complex. The protein is Vesicle transport protein GOT1A of Mus musculus (Mouse).